The primary structure comprises 164 residues: FMN reductase (NADH) RutF (164 aa).

The protein belongs to the non-flavoprotein flavin reductase family. RutF subfamily.

The catalysed reaction is FMNH2 + NAD(+) = FMN + NADH + 2 H(+). In terms of biological role, catalyzes the reduction of FMN to FMNH2 which is used to reduce pyrimidine by RutA via the Rut pathway. The polypeptide is FMN reductase (NADH) RutF (Escherichia coli (strain K12 / MC4100 / BW2952)).